The sequence spans 398 residues: MRKRTEPVALEHERCAAAGSSSSGSAAAALDADCRLKQNLRLTGTGAAEPRCAADAGMKRALGRRKGLWLRLRKILFCVLGLYIAIPFLIKLCPGIQAKLIFLNFVRVPYFIDLKKPQDQGLNHTCNYYLQPEEDVTIGVWHTVPAVWWKNAQGKDQMWYEDALASSHAIILYLHGNAGTRGGDHRVELYKVLSSLGYHVVTFDYRGWGDSVGTPSERGMTYDALHVFDWIKARSGDNPVYIWGHSLGTGVATNLVRRLCERETPPDALILESPFTNIREEAKSHPFSVIYRYFPGFDWFFLDPITSSGIKFANDENVKHISCPLLILHAEDDPVVPFQLGRKLYSIAAPARSFRDFKVQFVPFHSDLGYRHKYIYKSPELPRILREFLGKSEPEHQH.

Over 1–74 (MRKRTEPVAL…RKGLWLRLRK (74 aa)) the chain is Cytoplasmic. A helical membrane pass occupies residues 75–95 (ILFCVLGLYIAIPFLIKLCPG). The Extracellular segment spans residues 96–398 (IQAKLIFLNF…LGKSEPEHQH (303 aa)). N-linked (GlcNAc...) asparagine glycosylation is present at Asn123. The Nucleophile role is filled by Ser246. Residues Asp333 and His372 each act as charge relay system in the active site.

This sequence belongs to the serine esterase family.

The protein resides in the endoplasmic reticulum membrane. It catalyses the reaction 1-(9Z-octadecenoyl)-sn-glycero-3-phospho-L-serine + H2O = sn-glycero-3-phospho-L-serine + (9Z)-octadecenoate + H(+). The catalysed reaction is 1-(9Z-octadecenoyl)-sn-glycero-3-phospho-(1'-sn-glycerol) + H2O = sn-glycero-3-phospho-(1'-sn-glycerol) + (9Z)-octadecenoate + H(+). It carries out the reaction 1-(9Z-octadecenoyl)-sn-glycero-3-phospho-(1D-myo-inositol) + H2O = sn-glycero-3-phospho-1D-myo-inositol + (9Z)-octadecenoate + H(+). The enzyme catalyses 1-(9Z-octadecenoyl)-sn-glycero-3-phosphoethanolamine + H2O = sn-glycero-3-phosphoethanolamine + (9Z)-octadecenoate + H(+). It catalyses the reaction 1-(9Z-octadecenoyl)-sn-glycero-3-phosphocholine + H2O = 1-(9Z-octadecenoyl)-sn-glycerol + phosphocholine + H(+). The catalysed reaction is 2-(9Z-octadecenoyl)-glycerol + H2O = glycerol + (9Z)-octadecenoate + H(+). It carries out the reaction 1-hexadecanoyl-sn-glycero-3-phospho-L-serine + H2O = sn-glycero-3-phospho-L-serine + hexadecanoate + H(+). The enzyme catalyses 2-(5Z,8Z,11Z,14Z-eicosatetraenoyl)-glycerol + H2O = glycerol + (5Z,8Z,11Z,14Z)-eicosatetraenoate + H(+). It catalyses the reaction Hydrolyzes glycerol monoesters of long-chain fatty acids.. The catalysed reaction is 1-decanoylglycerol + H2O = decanoate + glycerol + H(+). It carries out the reaction 1-dodecanoylglycerol + H2O = dodecanoate + glycerol + H(+). The enzyme catalyses 1-tetradecanoylglycerol + H2O = tetradecanoate + glycerol + H(+). It catalyses the reaction 2-hexadecanoylglycerol + H2O = glycerol + hexadecanoate + H(+). The catalysed reaction is 1-(9Z-octadecenoyl)-glycerol + H2O = glycerol + (9Z)-octadecenoate + H(+). It carries out the reaction 2-(9Z,12Z-octadecadienoyl)-glycerol + H2O = (9Z,12Z)-octadecadienoate + glycerol + H(+). The enzyme catalyses 1-(5Z,8Z,11Z,14Z-eicosatetraenoyl)-glycerol + H2O = glycerol + (5Z,8Z,11Z,14Z)-eicosatetraenoate + H(+). It catalyses the reaction 1-(9Z,12Z-octadecadienoyl)-glycerol + H2O = (9Z,12Z)-octadecadienoate + glycerol + H(+). The catalysed reaction is 1-hexadecanoylglycerol + H2O = glycerol + hexadecanoate + H(+). It carries out the reaction 1-octadecanoylglycerol + H2O = octadecanoate + glycerol + H(+). The enzyme catalyses 1-octadecanoyl-2-(9,10-epoxyoctadecanoyl)-sn-glycero-3-phospho-L-serine + H2O = 9,10-epoxyoctadecanoate + 1-octadecanoyl-sn-glycero-3-phosphoserine + H(+). It catalyses the reaction 1-octadecanoyl-2-(10-hydroxyoctadecanoyl)-sn-glycero-3-phospho-L-serine + H2O = 1-octadecanoyl-sn-glycero-3-phosphoserine + 10-hydroxyoctadecanoate + H(+). The catalysed reaction is 1-hexadecanoyl-2-(10-hydroxyoctadecanoyl)-sn-glycero-3-phospho-L-serine + H2O = 10-hydroxyoctadecanoate + 1-hexadecanoyl-sn-glycero-3-phospho-L-serine + H(+). Its function is as follows. Lysophosphatidylserine (LPS) lipase that mediates the hydrolysis of lysophosphatidylserine, a class of signaling lipids that regulates immunological and neurological processes. Represents a major lysophosphatidylserine lipase in the brain, thereby playing a key role in the central nervous system. Also able to hydrolyze oxidized phosphatidylserine; oxidized phosphatidylserine is produced in response to severe inflammatory stress and constitutes a proapoptotic 'eat me' signal. Also has monoacylglycerol (MAG) lipase activity: hydrolyzes 2-arachidonoylglycerol (2-AG), thereby acting as a regulator of endocannabinoid signaling pathways. Has a strong preference for very-long-chain lipid substrates; substrate specificity is likely due to improved catalysis and not improved substrate binding. The sequence is that of Lysophosphatidylserine lipase ABHD12 from Macaca fascicularis (Crab-eating macaque).